Reading from the N-terminus, the 337-residue chain is ATP-dependent 6-phosphofructokinase (337 aa).

Gly-11 contacts ATP. Arg-21–Arg-25 lines the ADP pocket. Residues Arg-72–Tyr-73 and Gly-102–Ser-105 each bind ATP. Asp-103 contributes to the Mg(2+) binding site. Residue Thr-125–Asp-127 coordinates substrate. Asp-127 (proton acceptor) is an active-site residue. Arg-154 provides a ligand contact to ADP. Substrate-binding positions include Arg-162 and Met-169 to Arg-171. Residues Gly-185 to Asp-187, Lys-212, and Lys-214 to His-216 each bind ADP. Substrate contacts are provided by residues Glu-223, Arg-245, and His-251–Arg-254.

It belongs to the phosphofructokinase type A (PFKA) family. ATP-dependent PFK group I subfamily. Prokaryotic clade 'B1' sub-subfamily. Homotetramer. Requires Mg(2+) as cofactor.

It is found in the cytoplasm. It carries out the reaction beta-D-fructose 6-phosphate + ATP = beta-D-fructose 1,6-bisphosphate + ADP + H(+). It participates in carbohydrate degradation; glycolysis; D-glyceraldehyde 3-phosphate and glycerone phosphate from D-glucose: step 3/4. With respect to regulation, allosterically activated by ADP and other diphosphonucleosides, and allosterically inhibited by phosphoenolpyruvate. Its function is as follows. Catalyzes the phosphorylation of D-fructose 6-phosphate to fructose 1,6-bisphosphate by ATP, the first committing step of glycolysis. This is ATP-dependent 6-phosphofructokinase from Streptococcus pyogenes serotype M3 (strain SSI-1).